The chain runs to 131 residues: Profilin (131 aa).

It belongs to the profilin family. In terms of assembly, occurs in many kinds of cells as a complex with monomeric actin in a 1:1 ratio.

Its subcellular location is the cytoplasm. It localises to the cytoskeleton. Functionally, binds to actin and affects the structure of the cytoskeleton. At high concentrations, profilin prevents the polymerization of actin, whereas it enhances it at low concentrations. By binding to PIP2, it inhibits the formation of IP3 and DG. This Prunus avium (Cherry) protein is Profilin.